The primary structure comprises 181 residues: Large ribosomal subunit protein uL6 (181 aa).

Belongs to the universal ribosomal protein uL6 family. As to quaternary structure, part of the 50S ribosomal subunit.

Its function is as follows. This protein binds to the 23S rRNA, and is important in its secondary structure. It is located near the subunit interface in the base of the L7/L12 stalk, and near the tRNA binding site of the peptidyltransferase center. The sequence is that of Large ribosomal subunit protein uL6 from Desulforudis audaxviator (strain MP104C).